The chain runs to 355 residues: Chemerin-like receptor 2 (355 aa).

Over 1-41 (MEDLEETLFEEFENYSYALDYYSLESDLEEKVQLGVVHWVS) the chain is Extracellular. Asn14 carries an N-linked (GlcNAc...) asparagine glycan. A helical transmembrane segment spans residues 42–62 (LVLYCLSFVLGIPGNAIVIWF). The Cytoplasmic segment spans residues 63–73 (TGFKWKKTVST). Residues 74-94 (LWFLNLAIADFIFLLFLPLYI) form a helical membrane-spanning segment. Topologically, residues 95 to 112 (SYVVMNFHWPFGIWLCKA) are extracellular. Residues Cys110 and Cys187 are joined by a disulfide bond. The chain crosses the membrane as a helical span at residues 113–133 (NSFTAQLNMFASVFFLTVISL). The Cytoplasmic segment spans residues 134–154 (DHYIHLIHPVLSHRHRTLKNS). Residues 155–175 (LIVIIFIWLLASLIGGPALYF) form a helical membrane-spanning segment. The Extracellular portion of the chain corresponds to 176–210 (RDTVEFNNHTLCYNNFQKHDPDLTVIRHHVLTWVK). Residues 211–231 (FIVGYLFPLLTMSICYLCLIF) traverse the membrane as a helical segment. Residues 232 to 247 (KVKKRSILISSRHFWT) lie on the Cytoplasmic side of the membrane. A helical membrane pass occupies residues 248 to 268 (ILAVVVAFVVCWTPYHLFSIW). The Extracellular portion of the chain corresponds to 269 to 286 (ELTIHHNSYSHHVMQAGI). A helical transmembrane segment spans residues 287–307 (PLSTGLAFLNSCLNPILYVLI). The Cytoplasmic portion of the chain corresponds to 308–355 (SKKFQARFRSSVAEILKYTLWEVSCSGTVSEQLRNSETKNLCLLETAQ).

It belongs to the chemokine-like receptor (CMKLR) family.

It localises to the cell membrane. Functionally, receptor for chemoattractant adipokine chemerin/RARRES2 suggesting a role for this receptor in the regulation of inflammation and energy homesotasis. Signals mainly via beta-arrestin pathway. Binding of RARRES2 activates weakly G proteins, calcium mobilization and MAPK1/MAPK3 (ERK1/2) phosphorylation too. Acts also as a receptor for TAFA1, mediates its effects on neuronal stem-cell proliferation and differentiation via the activation of ROCK/ERK and ROCK/STAT3 signaling pathway. This chain is Chemerin-like receptor 2 (CMKLR2), found in Macaca mulatta (Rhesus macaque).